The primary structure comprises 195 residues: ATP-dependent Clp protease proteolytic subunit (195 aa).

The active-site Nucleophile is serine 97. Residue histidine 122 is part of the active site.

This sequence belongs to the peptidase S14 family. In terms of assembly, fourteen ClpP subunits assemble into 2 heptameric rings which stack back to back to give a disk-like structure with a central cavity, resembling the structure of eukaryotic proteasomes.

It localises to the cytoplasm. It carries out the reaction Hydrolysis of proteins to small peptides in the presence of ATP and magnesium. alpha-casein is the usual test substrate. In the absence of ATP, only oligopeptides shorter than five residues are hydrolyzed (such as succinyl-Leu-Tyr-|-NHMec, and Leu-Tyr-Leu-|-Tyr-Trp, in which cleavage of the -Tyr-|-Leu- and -Tyr-|-Trp bonds also occurs).. In terms of biological role, cleaves peptides in various proteins in a process that requires ATP hydrolysis. Has a chymotrypsin-like activity. Plays a major role in the degradation of misfolded proteins. This chain is ATP-dependent Clp protease proteolytic subunit, found in Campylobacter hominis (strain ATCC BAA-381 / DSM 21671 / CCUG 45161 / LMG 19568 / NCTC 13146 / CH001A).